Consider the following 513-residue polypeptide: Trigger factor (513 aa).

The PPIase FKBP-type domain maps to 164-249; the sequence is GDQIIIDFLG…VKAVKNAGEF (86 aa). The tract at residues 436-513 is disordered; sequence QAAIEAEEGA…KAPAKKKAEG (78 aa). Residues 452–461 are compositionally biased toward basic residues; that stretch reads AKKAPAKKKA. Positions 489–498 are enriched in low complexity; the sequence is ADEAPAAEEA. A compositionally biased stretch (basic residues) spans 501–513; the sequence is AKKKAPAKKKAEG.

It belongs to the FKBP-type PPIase family. Tig subfamily.

It is found in the cytoplasm. It carries out the reaction [protein]-peptidylproline (omega=180) = [protein]-peptidylproline (omega=0). In terms of biological role, involved in protein export. Acts as a chaperone by maintaining the newly synthesized protein in an open conformation. Functions as a peptidyl-prolyl cis-trans isomerase. The protein is Trigger factor of Novosphingobium aromaticivorans (strain ATCC 700278 / DSM 12444 / CCUG 56034 / CIP 105152 / NBRC 16084 / F199).